We begin with the raw amino-acid sequence, 545 residues long: Oligopeptide-binding protein OppA (545 aa).

The signal sequence occupies residues Met1 to Ala20. Residue Cys21 is the site of N-palmitoyl cysteine attachment. Cys21 is lipidated: S-diacylglycerol cysteine. Thr470 is subject to Phosphothreonine.

The protein belongs to the bacterial solute-binding protein 5 family. The complex is composed of two ATP-binding proteins (OppD and OppF), two transmembrane proteins (OppB and OppC) and a solute-binding protein (OppA). OppA interacts with FloT in detergent-resistant membranes (DRM). Colocalizes rarely with FloT membrane assemblies.

Its subcellular location is the cell membrane. The protein resides in the membrane raft. Its function is as follows. Part of the ABC transporter complex OppABCDF involved in the uptake of oligopeptides. Plays an important nutritional role. Binds peptides containing up to five amino acids residues regardless of their sequence, with highest affinity for tetra- and pentapeptides. Binds to the sporulation-promoting peptide PhrE (Ser-Arg-Asn-Val-Thr). Required for sporulation and genetic competence. The polypeptide is Oligopeptide-binding protein OppA (Bacillus subtilis (strain 168)).